The primary structure comprises 92 residues: Small ribosomal subunit protein uS19 (92 aa).

The protein belongs to the universal ribosomal protein uS19 family.

In terms of biological role, protein S19 forms a complex with S13 that binds strongly to the 16S ribosomal RNA. In Cellvibrio japonicus (strain Ueda107) (Pseudomonas fluorescens subsp. cellulosa), this protein is Small ribosomal subunit protein uS19.